A 200-amino-acid chain; its full sequence is 3-isopropylmalate dehydratase small subunit (200 aa).

This sequence belongs to the LeuD family. LeuD type 1 subfamily. Heterodimer of LeuC and LeuD.

The catalysed reaction is (2R,3S)-3-isopropylmalate = (2S)-2-isopropylmalate. It participates in amino-acid biosynthesis; L-leucine biosynthesis; L-leucine from 3-methyl-2-oxobutanoate: step 2/4. Its function is as follows. Catalyzes the isomerization between 2-isopropylmalate and 3-isopropylmalate, via the formation of 2-isopropylmaleate. The protein is 3-isopropylmalate dehydratase small subunit of Pectobacterium atrosepticum (strain SCRI 1043 / ATCC BAA-672) (Erwinia carotovora subsp. atroseptica).